The sequence spans 370 residues: Germination protease (370 aa).

The propeptide occupies 1 to 15 (MEKELDLSQYSVRTD).

It belongs to the peptidase A25 family. In terms of assembly, homotetramer. Post-translationally, autoproteolytically processed. The inactive tetrameric zymogen termed p46 autoprocesses to a smaller form termed p41, which is active only during spore germination.

The enzyme catalyses Endopeptidase action with P4 Glu or Asp, P1 preferably Glu &gt; Asp, P1' hydrophobic and P2' Ala.. Initiates the rapid degradation of small, acid-soluble proteins during spore germination. This Priestia megaterium (strain ATCC 12872 / QMB1551) (Bacillus megaterium) protein is Germination protease (gpr).